Consider the following 506-residue polypeptide: Adenylosuccinate synthetase (506 aa).

GTP-binding positions include glycine 35–lysine 41 and glycine 63–threonine 65. The active-site Proton acceptor is aspartate 36. Mg(2+)-binding residues include aspartate 36 and glycine 63. IMP is bound by residues aspartate 36–lysine 39, asparagine 61–histidine 64, threonine 212, arginine 226, asparagine 304, threonine 319, and arginine 383. The Proton donor role is filled by histidine 64. Residue valine 379 to arginine 385 coordinates substrate. Residues arginine 385, lysine 411–aspartate 413, and glycine 494–glycine 496 contribute to the GTP site.

Belongs to the adenylosuccinate synthetase family. In terms of assembly, homodimer. Requires Mg(2+) as cofactor.

It localises to the cytoplasm. It carries out the reaction IMP + L-aspartate + GTP = N(6)-(1,2-dicarboxyethyl)-AMP + GDP + phosphate + 2 H(+). Its pathway is purine metabolism; AMP biosynthesis via de novo pathway; AMP from IMP: step 1/2. Its function is as follows. Plays an important role in the de novo pathway and in the salvage pathway of purine nucleotide biosynthesis. Catalyzes the first committed step in the biosynthesis of AMP from IMP. This Drosophila yakuba (Fruit fly) protein is Adenylosuccinate synthetase.